Reading from the N-terminus, the 179-residue chain is Small capsomere-interacting protein (179 aa).

The disordered stretch occupies residues 107-179 (IPLPPETGEF…QAPGTKGKKQ (73 aa)). Over residues 118–171 (TGGTSSSVRSASGASGGAASTAASGGSASAAASGASGGSASQSDVSSRSRSQQA) the composition is skewed to low complexity.

Belongs to the herpesviridae small capsomere-interacting protein family. As to quaternary structure, interacts with the major capsid protein/MCP.

It is found in the virion. It localises to the host nucleus. Functionally, participates in the assembly of the infectious particles by decorating the outer surface of the capsid shell and thus forming a layer between the capsid and the tegument. Complexes composed of the major capsid protein and small capsomere-interacting protein/SCP assemble together in the host cytoplasm and are translocated to the nucleus, where they accumulate and participate in capsid assembly. This Equine herpesvirus 2 (strain 86/87) (EHV-2) protein is Small capsomere-interacting protein.